A 518-amino-acid polypeptide reads, in one-letter code: Serine incorporator 4 (518 aa).

A run of 10 helical transmembrane segments spans residues 59-79 (CSRL…CLLL), 122-142 (VCAG…HLHS), 153-173 (SFWL…FCIP), 184-204 (IGIC…TAFA), 222-242 (FLAV…GAVL), 259-279 (LLSL…APCI), 286-306 (SGLL…FSAL), 338-357 (ISLA…FACN), 427-447 (AFHF…TNWF), and 470-490 (VASC…PLCW).

The protein belongs to the TDE1 family.

It is found in the membrane. Incorporates a polar amino acid serine into membranes and facilitates the synthesis of two serine-derived lipids, phosphatidylserine and sphingolipids. This chain is Serine incorporator 4 (SERINC4), found in Homo sapiens (Human).